A 314-amino-acid chain; its full sequence is tRNA dimethylallyltransferase (314 aa).

Gly11–Thr18 serves as a coordination point for ATP. Substrate is bound at residue Thr13 to Thr18. Interaction with substrate tRNA stretches follow at residues Asp36–Leu39, Gln160–Arg164, Arg241–Arg246, and Lys274–Arg281.

It belongs to the IPP transferase family. As to quaternary structure, monomer. It depends on Mg(2+) as a cofactor.

It carries out the reaction adenosine(37) in tRNA + dimethylallyl diphosphate = N(6)-dimethylallyladenosine(37) in tRNA + diphosphate. Its function is as follows. Catalyzes the transfer of a dimethylallyl group onto the adenine at position 37 in tRNAs that read codons beginning with uridine, leading to the formation of N6-(dimethylallyl)adenosine (i(6)A). The protein is tRNA dimethylallyltransferase of Glaesserella parasuis serovar 5 (strain SH0165) (Haemophilus parasuis).